The following is a 380-amino-acid chain: Probable transposase for insertion sequence element IS701 (380 aa).

Its function is as follows. Involved in the transposition of the insertion sequence. This chain is Probable transposase for insertion sequence element IS701, found in Microchaete diplosiphon (Fremyella diplosiphon).